A 1603-amino-acid chain; its full sequence is Vitellogenin-5 (1603 aa).

Positions 1–15 are cleaved as a signal peptide; sequence MKSIIIASLVALAIA. Residues 24 to 685 form the Vitellogenin domain; the sequence is FSPKSEYVYK…EKNAFLPKEV (662 aa). One can recognise a VWFD domain in the interval 1306 to 1475; it reads ATCKVDQSEV…SYLLKNEECE (170 aa). 2 disulfides stabilise this stretch: Cys1308-Cys1438 and Cys1330-Cys1474. The interval 1492-1513 is disordered; the sequence is NREEKKSDYESSSDYESNYDEK.

Post-translationally, vitellogenin 5 undergoes little if any processing before being packaged into yolk platelets. In terms of tissue distribution, expressed in the intestine of adult hermaphrodites.

The protein resides in the secreted. Functionally, precursor of the egg-yolk proteins that are sources of nutrients during embryonic development. Together with other vitellogenins, may play a role in modulating life-span, acting via induction of autophagy and lysosomal lipolysis. This Caenorhabditis elegans protein is Vitellogenin-5 (vit-5).